We begin with the raw amino-acid sequence, 112 residues long: Putative RNase TTE0752 (112 aa).

Active-site residues include Arg74 and His79. The RX(4)HXY motif signature appears at 74-81 (RDKLIHEY). Tyr81 bears the O-di-AMP-tyrosine mark.

This sequence belongs to the HepT RNase toxin family. Homodimer, probably forms a complex with cognate antitoxin TTE0751. Post-translationally, modified by cognate antitoxin TTE0751; probably at least 2 successive AMPylation events occur on Tyr-81.

In terms of biological role, probable toxic component of a putative type VII toxin-antitoxin (TA) system, probably an RNase. Probably neutralized by cognate antitoxin TTE0751. Neutralization may be due to AMPylation by TTE0751. This is Putative RNase TTE0752 from Caldanaerobacter subterraneus subsp. tengcongensis (strain DSM 15242 / JCM 11007 / NBRC 100824 / MB4) (Thermoanaerobacter tengcongensis).